Consider the following 1215-residue polypeptide: von Willebrand factor A domain-containing protein 5B1 (1215 aa).

The N-terminal stretch at 1–18 (MPGLLNCLTGAALPLMES) is a signal peptide. The VIT domain occupies 19-141 (DVTSYVSGYA…NVTVFISTSS (123 aa)). An N-linked (GlcNAc...) asparagine glycan is attached at N132. One can recognise a VWFA domain in the interval 353 to 532 (EFIFLIDRSN…KAMAPVLSDV (180 aa)). The disordered stretch occupies residues 595-674 (SVFYPSQDEG…DPTGTARRYP (80 aa)). Composition is skewed to polar residues over residues 608-621 (GSGN…QGQT) and 646-667 (YSTN…SDPT). Y879 is subject to Phosphotyrosine. 3 disordered regions span residues 934-953 (GSSA…SSAA), 964-999 (QDSP…APSS), and 1100-1121 (SPQD…SLKS). Composition is skewed to polar residues over residues 964–975 (QDSPTSTFNKTP), 990–999 (QNLSASAPSS), and 1100–1112 (SPQD…SSPP).

It is found in the secreted. The chain is von Willebrand factor A domain-containing protein 5B1 (Vwa5b1) from Mus musculus (Mouse).